Reading from the N-terminus, the 418-residue chain is Tyrosine--tRNA ligase (418 aa).

Residue Y39 participates in L-tyrosine binding. The 'HIGH' region motif lies at 44–53; that stretch reads CTAASLHVGH. Residues Y176 and Q180 each coordinate L-tyrosine. The 'KMSKS' region signature appears at 236-240; sequence KMGKT. K239 contributes to the ATP binding site. Positions 350-418 constitute an S4 RNA-binding domain; the sequence is IGVLVAFAEK…KKKHVLLRLA (69 aa).

Belongs to the class-I aminoacyl-tRNA synthetase family. TyrS type 1 subfamily. Homodimer.

It is found in the cytoplasm. It catalyses the reaction tRNA(Tyr) + L-tyrosine + ATP = L-tyrosyl-tRNA(Tyr) + AMP + diphosphate + H(+). In terms of biological role, catalyzes the attachment of tyrosine to tRNA(Tyr) in a two-step reaction: tyrosine is first activated by ATP to form Tyr-AMP and then transferred to the acceptor end of tRNA(Tyr). This is Tyrosine--tRNA ligase from Rhodopseudomonas palustris (strain ATCC BAA-98 / CGA009).